The primary structure comprises 259 residues: 5'-nucleotidase SurE (259 aa).

4 residues coordinate a divalent metal cation: D8, D9, S39, and N96.

This sequence belongs to the SurE nucleotidase family. The cofactor is a divalent metal cation.

Its subcellular location is the cytoplasm. The catalysed reaction is a ribonucleoside 5'-phosphate + H2O = a ribonucleoside + phosphate. In terms of biological role, nucleotidase that shows phosphatase activity on nucleoside 5'-monophosphates. The chain is 5'-nucleotidase SurE from Pelotomaculum thermopropionicum (strain DSM 13744 / JCM 10971 / SI).